The sequence spans 264 residues: 5'-nucleotidase SurE (264 aa).

D9, D10, S40, and N95 together coordinate a divalent metal cation.

It belongs to the SurE nucleotidase family. The cofactor is a divalent metal cation.

Its subcellular location is the cytoplasm. It carries out the reaction a ribonucleoside 5'-phosphate + H2O = a ribonucleoside + phosphate. Its function is as follows. Nucleotidase that shows phosphatase activity on nucleoside 5'-monophosphates. This chain is 5'-nucleotidase SurE, found in Helicobacter hepaticus (strain ATCC 51449 / 3B1).